The chain runs to 85 residues: MTDKIRTVQGRVISDKMDKSFTIAIERKVKHPLLGKFIRRTTKLHVHDENNEARLGDWVEIKECRPVSKTKSWTLVRVVEKATIA.

Belongs to the universal ribosomal protein uS17 family. As to quaternary structure, part of the 30S ribosomal subunit.

Functionally, one of the primary rRNA binding proteins, it binds specifically to the 5'-end of 16S ribosomal RNA. The polypeptide is Small ribosomal subunit protein uS17 (Actinobacillus succinogenes (strain ATCC 55618 / DSM 22257 / CCUG 43843 / 130Z)).